A 348-amino-acid chain; its full sequence is RNA 3'-terminal phosphate cyclase (348 aa).

ATP is bound by residues Gln107 and 290-294 (HLADQ). The active-site Tele-AMP-histidine intermediate is His316.

This sequence belongs to the RNA 3'-terminal cyclase family. Type 1 subfamily.

The protein localises to the cytoplasm. It catalyses the reaction a 3'-end 3'-phospho-ribonucleotide-RNA + ATP = a 3'-end 2',3'-cyclophospho-ribonucleotide-RNA + AMP + diphosphate. Catalyzes the conversion of 3'-phosphate to a 2',3'-cyclic phosphodiester at the end of RNA. The mechanism of action of the enzyme occurs in 3 steps: (A) adenylation of the enzyme by ATP; (B) transfer of adenylate to an RNA-N3'P to produce RNA-N3'PP5'A; (C) and attack of the adjacent 2'-hydroxyl on the 3'-phosphorus in the diester linkage to produce the cyclic end product. The biological role of this enzyme is unknown but it is likely to function in some aspects of cellular RNA processing. The chain is RNA 3'-terminal phosphate cyclase from Trichormus variabilis (strain ATCC 29413 / PCC 7937) (Anabaena variabilis).